The sequence spans 268 residues: Indole-3-glycerol phosphate synthase (268 aa).

Belongs to the TrpC family.

The catalysed reaction is 1-(2-carboxyphenylamino)-1-deoxy-D-ribulose 5-phosphate + H(+) = (1S,2R)-1-C-(indol-3-yl)glycerol 3-phosphate + CO2 + H2O. It participates in amino-acid biosynthesis; L-tryptophan biosynthesis; L-tryptophan from chorismate: step 4/5. In Lachnospira eligens (strain ATCC 27750 / DSM 3376 / VPI C15-48 / C15-B4) (Eubacterium eligens), this protein is Indole-3-glycerol phosphate synthase.